A 260-amino-acid polypeptide reads, in one-letter code: 5'-nucleotidase SurE (260 aa).

4 residues coordinate a divalent metal cation: Asp8, Asp9, Ser39, and Asn93.

The protein belongs to the SurE nucleotidase family. Requires a divalent metal cation as cofactor.

It is found in the cytoplasm. The catalysed reaction is a ribonucleoside 5'-phosphate + H2O = a ribonucleoside + phosphate. In terms of biological role, nucleotidase that shows phosphatase activity on nucleoside 5'-monophosphates. The polypeptide is 5'-nucleotidase SurE (Thermofilum pendens (strain DSM 2475 / Hrk 5)).